The primary structure comprises 424 residues: MSGMILDELSWRGLIAQSTDLDTLAAEAQRGPMTVYAGFDPTAPSLHAGHLVPLLTLRRFQRAGHRPIVLAGGATGMIGDPRDVGERSLNEADTVAEWTERIRGQLERFVDFDDSPMGAIVENNLEWTGSLSAIEFLRDIGKHFSVNVMLARDTIRRRLAGEGISYTEFSYLLLQANDYVELHRRHGCTLQIGGADQWGNIIAGVRLVRQKLGATVHALTVPLVTAADGTKFGKSTGGGSLWLDPQMTSPYAWYQYFVNTADADVIRYLRWFTFLSADELAELEQATAQRPQQRAAQRRLASELTVLVHGEAATAAVEHASRALFGRGELARLDEATLAAALRETTVAELKPGSPDGIVDLLVASGLSASKGAARRTIHEGGVSVNNIRVDNEEWVPQSSDFLHGRWLVLRRGKRSIAGVERIG.

Tyr36 provides a ligand contact to L-tyrosine. The 'HIGH' region motif lies at Pro41–His50. L-tyrosine is bound by residues Tyr171 and Gln175. The 'KMSKS' region signature appears at Lys231–Ser235. Lys234 is a binding site for ATP. The 58-residue stretch at Asp356–Gly413 folds into the S4 RNA-binding domain.

The protein belongs to the class-I aminoacyl-tRNA synthetase family. TyrS type 1 subfamily. In terms of assembly, homodimer.

The protein localises to the cytoplasm. It carries out the reaction tRNA(Tyr) + L-tyrosine + ATP = L-tyrosyl-tRNA(Tyr) + AMP + diphosphate + H(+). Catalyzes the attachment of tyrosine to tRNA(Tyr) in a two-step reaction: tyrosine is first activated by ATP to form Tyr-AMP and then transferred to the acceptor end of tRNA(Tyr). The protein is Tyrosine--tRNA ligase of Mycobacterium bovis (strain ATCC BAA-935 / AF2122/97).